We begin with the raw amino-acid sequence, 76 residues long: ATP synthase subunit 9, mitochondrial (76 aa).

Helical transmembrane passes span Ile-14–Ile-34 and Ile-52–Leu-72.

It belongs to the ATPase C chain family. In terms of assembly, F-type ATPases have 2 components, CF(1) - the catalytic core - and CF(0) - the membrane proton channel. CF(1) has five subunits: alpha(3), beta(3), gamma(1), delta(1), epsilon(1). CF(0) has three main subunits: a, b and c.

Its subcellular location is the mitochondrion membrane. In terms of biological role, mitochondrial membrane ATP synthase (F(1)F(0) ATP synthase or Complex V) produces ATP from ADP in the presence of a proton gradient across the membrane which is generated by electron transport complexes of the respiratory chain. F-type ATPases consist of two structural domains, F(1) - containing the extramembraneous catalytic core and F(0) - containing the membrane proton channel, linked together by a central stalk and a peripheral stalk. During catalysis, ATP synthesis in the catalytic domain of F(1) is coupled via a rotary mechanism of the central stalk subunits to proton translocation. Part of the complex F(0) domain. A homomeric c-ring of probably 10 subunits is part of the complex rotary element. The polypeptide is ATP synthase subunit 9, mitochondrial (ATP9) (Candida albicans (strain SC5314 / ATCC MYA-2876) (Yeast)).